The primary structure comprises 366 residues: Adenosine deaminase (366 aa).

Residues H19 and H21 each coordinate Zn(2+). The substrate site is built by H21, D23, and G181. H208 serves as a coordination point for Zn(2+). Catalysis depends on E211, which acts as the Proton donor. Residue D304 participates in Zn(2+) binding.

Belongs to the metallo-dependent hydrolases superfamily. Adenosine and AMP deaminases family. Adenosine deaminase subfamily. Zn(2+) is required as a cofactor.

The catalysed reaction is adenosine + H2O + H(+) = inosine + NH4(+). It catalyses the reaction 2'-deoxyadenosine + H2O + H(+) = 2'-deoxyinosine + NH4(+). In terms of biological role, catalyzes the hydrolytic deamination of adenosine and 2-deoxyadenosine. This Mycobacterium avium (strain 104) protein is Adenosine deaminase.